The sequence spans 125 residues: Ly6/PLAUR domain-containing protein 2 (125 aa).

Positions 1-22 (MRGTRLALLALVLAACGELAPA) are cleaved as a signal peptide. A UPAR/Ly6 domain is found at 25 to 100 (CYVCPEPTGV…VSCCNTELCN (76 aa)). Residue asparagine 46 is glycosylated (N-linked (GlcNAc...) asparagine). The GPI-anchor amidated glycine moiety is linked to residue glycine 103. The propeptide at 104 to 125 (APALNSLHCGALTLLPLLSLRL) is removed in mature form.

The protein resides in the cell membrane. This chain is Ly6/PLAUR domain-containing protein 2 (LYPD2), found in Homo sapiens (Human).